The following is a 225-amino-acid chain: Fibronectin type III domain-containing protein (225 aa).

The N-terminal stretch at 1–17 (MFSFGIILLTVVSFTNA) is a signal peptide. In terms of domain architecture, Fibronectin type-III spans 106–206 (PPTNVIVEST…MPLNVKTPDI (101 aa)).

As to expression, component of the organic matrix of calcified shell layers like nacre and prisms.

The protein resides in the secreted. This Mytilus californianus (California mussel) protein is Fibronectin type III domain-containing protein.